Here is an 87-residue protein sequence, read N- to C-terminus: U3-theraphotoxin-Hhn1p (87 aa).

The first 24 residues, 1–24 (MVNMKASMFLTFAGLVLLFVVCYA), serve as a signal peptide directing secretion. Residues 25-52 (SESEEKEFPKEMLSSIFAVDNDFKQEER) constitute a propeptide that is removed on maturation. 3 cysteine pairs are disulfide-bonded: Cys54–Cys67, Cys61–Cys72, and Cys66–Cys79.

It belongs to the neurotoxin 10 (Hwtx-1) family. 51 (Hntx-8) subfamily. Hntx-8 sub-subfamily. Expressed by the venom gland.

It localises to the secreted. Functionally, ion channel inhibitor. The protein is U3-theraphotoxin-Hhn1p of Cyriopagopus hainanus (Chinese bird spider).